The sequence spans 80 residues: Toxin-like peptide AaF1CA1 (80 aa).

The first 22 residues, 1–22 (MMKLVLFSVIVILFSLIGSIHG), serve as a signal peptide directing secretion. Residues 25–80 (VPGNYPLRPFRYRYGCAVPGDSDYCVRVCRKHGVRYGYCWFFTCWCEYLEDKNIKI) enclose the LCN-type CS-alpha/beta domain. 3 disulfides stabilise this stretch: Cys-40–Cys-63, Cys-49–Cys-68, and Cys-53–Cys-70.

The protein belongs to the long (3 C-C) scorpion toxin superfamily. In terms of tissue distribution, expressed by the venom gland.

The protein localises to the secreted. In terms of biological role, probable ion channel inhibitor. The protein is Toxin-like peptide AaF1CA1 of Androctonus australis (Sahara scorpion).